We begin with the raw amino-acid sequence, 110 residues long: G antigen 2E (110 aa).

Positions 1 to 110 (MSWRGRSTYY…NPEEVKTPEE (110 aa)) are disordered. Composition is skewed to acidic residues over residues 32 to 45 (FSDE…EEGE) and 87 to 96 (ECEDGPDGQE).

Belongs to the GAGE family.

The polypeptide is G antigen 2E (GAGE2E) (Homo sapiens (Human)).